Consider the following 578-residue polypeptide: A-type ATP synthase subunit A (578 aa).

An ATP-binding site is contributed by 228–235; that stretch reads GPFGSGKT.

It belongs to the ATPase alpha/beta chains family. In terms of assembly, has multiple subunits with at least A(3), B(3), C, D, E, F, H, I and proteolipid K(x).

Its subcellular location is the cell membrane. The catalysed reaction is ATP + H2O + 4 H(+)(in) = ADP + phosphate + 5 H(+)(out). Component of the A-type ATP synthase that produces ATP from ADP in the presence of a proton gradient across the membrane. The A chain is the catalytic subunit. The sequence is that of A-type ATP synthase subunit A from Methanosarcina acetivorans (strain ATCC 35395 / DSM 2834 / JCM 12185 / C2A).